Here is a 454-residue protein sequence, read N- to C-terminus: Histidine--tRNA ligase (454 aa).

Belongs to the class-II aminoacyl-tRNA synthetase family. In terms of assembly, homodimer.

Its subcellular location is the cytoplasm. It catalyses the reaction tRNA(His) + L-histidine + ATP = L-histidyl-tRNA(His) + AMP + diphosphate + H(+). The polypeptide is Histidine--tRNA ligase (Porphyromonas gingivalis (strain ATCC BAA-308 / W83)).